A 95-amino-acid chain; its full sequence is Small ribosomal subunit protein bS6 (95 aa).

This sequence belongs to the bacterial ribosomal protein bS6 family.

In terms of biological role, binds together with bS18 to 16S ribosomal RNA. This chain is Small ribosomal subunit protein bS6, found in Symbiobacterium thermophilum (strain DSM 24528 / JCM 14929 / IAM 14863 / T).